A 108-amino-acid polypeptide reads, in one-letter code: Peptidyl-prolyl cis-trans isomerase FKBP1B (108 aa).

Residues G20 to E108 enclose the PPIase FKBP-type domain.

It belongs to the FKBP-type PPIase family. FKBP1 subfamily. In terms of assembly, identified in a complex composed of RYR2, FKBP1B, PKA catalytic subunit, PRKAR2A, AKAP6, and the protein phosphatases PP2A and PP1. Interacts directly with RYR2.

It is found in the cytoplasm. It localises to the sarcoplasmic reticulum. It catalyses the reaction [protein]-peptidylproline (omega=180) = [protein]-peptidylproline (omega=0). With respect to regulation, inhibited by both FK506 and rapamycin. Functionally, has the potential to contribute to the immunosuppressive and toxic effects of FK506 and rapamycin. PPIases accelerate the folding of proteins. It catalyzes the cis-trans isomerization of proline imidic peptide bonds in oligopeptides. In Mus musculus (Mouse), this protein is Peptidyl-prolyl cis-trans isomerase FKBP1B (Fkbp1b).